We begin with the raw amino-acid sequence, 388 residues long: Succinate--CoA ligase [ADP-forming] subunit beta (388 aa).

Residues 9-244 enclose the ATP-grasp domain; that stretch reads KQLFAEYGLP…PSQDDPREAH (236 aa). Residues K46, 53 to 55, E99, T102, and E107 each bind ATP; that span reads GRG. The Mg(2+) site is built by N199 and D213. Substrate is bound by residues N264 and 321 to 323; that span reads GIV.

Belongs to the succinate/malate CoA ligase beta subunit family. In terms of assembly, heterotetramer of two alpha and two beta subunits. Requires Mg(2+) as cofactor.

The enzyme catalyses succinate + ATP + CoA = succinyl-CoA + ADP + phosphate. The catalysed reaction is GTP + succinate + CoA = succinyl-CoA + GDP + phosphate. It functions in the pathway carbohydrate metabolism; tricarboxylic acid cycle; succinate from succinyl-CoA (ligase route): step 1/1. Functionally, succinyl-CoA synthetase functions in the citric acid cycle (TCA), coupling the hydrolysis of succinyl-CoA to the synthesis of either ATP or GTP and thus represents the only step of substrate-level phosphorylation in the TCA. The beta subunit provides nucleotide specificity of the enzyme and binds the substrate succinate, while the binding sites for coenzyme A and phosphate are found in the alpha subunit. The sequence is that of Succinate--CoA ligase [ADP-forming] subunit beta from Ectopseudomonas mendocina (strain ymp) (Pseudomonas mendocina).